The chain runs to 70 residues: uncharacterized protein (70 aa).

The signal sequence occupies residues 1-16 (MKLLLVLITLIIAALA).

This is an uncharacterized protein from Orgyia pseudotsugata (Douglas-fir tussock moth).